The following is a 355-amino-acid chain: 3-dehydroquinate synthase (355 aa).

NAD(+) is bound by residues 71 to 76 (EGEERK), 105 to 109 (GVVGD), 129 to 130 (TS), lysine 142, and lysine 151. Zn(2+)-binding residues include glutamate 184, histidine 246, and histidine 263.

Belongs to the sugar phosphate cyclases superfamily. Dehydroquinate synthase family. The cofactor is NAD(+). Co(2+) serves as cofactor. It depends on Zn(2+) as a cofactor.

Its subcellular location is the cytoplasm. It catalyses the reaction 7-phospho-2-dehydro-3-deoxy-D-arabino-heptonate = 3-dehydroquinate + phosphate. It participates in metabolic intermediate biosynthesis; chorismate biosynthesis; chorismate from D-erythrose 4-phosphate and phosphoenolpyruvate: step 2/7. Catalyzes the conversion of 3-deoxy-D-arabino-heptulosonate 7-phosphate (DAHP) to dehydroquinate (DHQ). In Streptococcus pneumoniae (strain ATCC BAA-255 / R6), this protein is 3-dehydroquinate synthase.